Reading from the N-terminus, the 436-residue chain is MKQPLKLTTRQGERIAVVAGLRTPFAKQATAFHGVPAVDLGKLVVSELLARTSLDPKLIDQLVFGQVVQMPEAPNIAREIVLGTGMSVTTDAYSVSRACATSFQAVANVTESIMAGTVDIAIAGGADSSSVLPIGVSKKLARALVDLNKARNLQQRFNILRALRLKDLMPVPPAVAEYSTGLSMGQTAEQMAKSHQISREAQDALAHRSHTLAAQAWADGKLSGEVFTAHVPPYKSPLERDNNIRESSDLASYAKLKPVFDRVHGTVTAANATPLTDGAAAVLLMREGRAKELGLEPLGYIRSFAFSAIDVWQDMLMGPSYATPLALERAGITLADLTLIDMHEAFAAQTLANLKMFASAEFARDKLGRSQAIGEVDMDKFNVLGGSLAYGHPFAATGARMITQTLHELRRRGGGLGLNTACAAGGLGVAMVLEVE.

Catalysis depends on Cys-99, which acts as the Acyl-thioester intermediate. Active-site proton acceptor residues include His-392 and Cys-422.

Belongs to the thiolase-like superfamily. Thiolase family. As to quaternary structure, heterotetramer of two alpha chains (FadJ) and two beta chains (FadI).

It localises to the cytoplasm. It catalyses the reaction an acyl-CoA + acetyl-CoA = a 3-oxoacyl-CoA + CoA. It functions in the pathway lipid metabolism; fatty acid beta-oxidation. In terms of biological role, catalyzes the final step of fatty acid oxidation in which acetyl-CoA is released and the CoA ester of a fatty acid two carbons shorter is formed. The polypeptide is 3-ketoacyl-CoA thiolase (Aeromonas salmonicida (strain A449)).